The sequence spans 201 residues: LexA repressor (201 aa).

The H-T-H motif DNA-binding region spans arginine 28–lysine 48. Catalysis depends on for autocatalytic cleavage activity residues serine 118 and lysine 155.

It belongs to the peptidase S24 family. As to quaternary structure, homodimer.

The catalysed reaction is Hydrolysis of Ala-|-Gly bond in repressor LexA.. Functionally, represses a number of genes involved in the response to DNA damage (SOS response), including recA and lexA. In the presence of single-stranded DNA, RecA interacts with LexA causing an autocatalytic cleavage which disrupts the DNA-binding part of LexA, leading to derepression of the SOS regulon and eventually DNA repair. The chain is LexA repressor from Saccharophagus degradans (strain 2-40 / ATCC 43961 / DSM 17024).